A 302-amino-acid chain; its full sequence is Sulfate adenylyltransferase subunit 2 (302 aa).

Positions 280 to 302 (RQGRLIDSDQSASMEQKKRQGYF) are disordered.

Belongs to the PAPS reductase family. CysD subfamily. Heterodimer composed of CysD, the smaller subunit, and CysN.

The catalysed reaction is sulfate + ATP + H(+) = adenosine 5'-phosphosulfate + diphosphate. Its pathway is sulfur metabolism; hydrogen sulfide biosynthesis; sulfite from sulfate: step 1/3. Functionally, with CysN forms the ATP sulfurylase (ATPS) that catalyzes the adenylation of sulfate producing adenosine 5'-phosphosulfate (APS) and diphosphate, the first enzymatic step in sulfur assimilation pathway. APS synthesis involves the formation of a high-energy phosphoric-sulfuric acid anhydride bond driven by GTP hydrolysis by CysN coupled to ATP hydrolysis by CysD. The polypeptide is Sulfate adenylyltransferase subunit 2 (Shewanella sp. (strain ANA-3)).